Reading from the N-terminus, the 284-residue chain is Tropomyosin alpha-1 chain (284 aa).

Met-1 carries the N-acetylmethionine modification. The segment at 1 to 38 (MDAIKKKMQMLKLDKENALDRAEQAEADKKAAEDRSKQ) is disordered. The stretch at 1–284 (MDAIKKKMQM…DHALNDMTSI (284 aa)) forms a coiled coil. Basic and acidic residues predominate over residues 12 to 38 (KLDKENALDRAEQAEADKKAAEDRSKQ). Residues Ala-31, Ser-45, and Lys-51 each carry the phosphoserine modification. Residues 116–136 (AEKAADESERGMKVIESRAQK) form a disordered region. A phosphoserine mark is found at Ser-174, Ser-186, and Ser-206. The residue at position 213 (Lys-213) is an N6-acetyllysine. Residue Ser-252 is modified to Phosphoserine. Tyr-261 is subject to Phosphotyrosine. Position 271 is a phosphoserine (Ser-271). The residue at position 283 (Ser-283) is a Phosphoserine; by DAPK1.

It belongs to the tropomyosin family. Homodimer. Heterodimer of an alpha (TPM1, TPM3 or TPM4) and a beta (TPM2) chain. Interacts with HRG (via the HRR domain); the interaction contributes to the antiangiogenic properties of the histidine/proline-rich region (HRR) of HRG. Interacts (via N-terminus) with LMOD2 (via N-terminus) and TMOD1 (via N-terminus). Post-translationally, phosphorylated at Ser-283 by DAPK1 in response to oxidative stress and this phosphorylation enhances stress fiber formation in endothelial cells. Detected in primary breast cancer tissues but undetectable in normal breast tissues in Sudanese patients. Isoform 1 is expressed in adult and fetal skeletal muscle and cardiac tissues, with higher expression levels in the cardiac tissues. Isoform 10 is expressed in adult and fetal cardiac tissues, but not in skeletal muscle.

The protein resides in the cytoplasm. It localises to the cytoskeleton. Its function is as follows. Binds to actin filaments in muscle and non-muscle cells. Plays a central role, in association with the troponin complex, in the calcium dependent regulation of vertebrate striated muscle contraction. Smooth muscle contraction is regulated by interaction with caldesmon. In non-muscle cells is implicated in stabilizing cytoskeleton actin filaments. The sequence is that of Tropomyosin alpha-1 chain (TPM1) from Homo sapiens (Human).